A 365-amino-acid chain; its full sequence is Embryonic developmental protein tofu-6 (365 aa).

The 78-residue stretch at 13–90 folds into the RRM domain; it reads AGFHIRNVPK…YSLKVSDHKN (78 aa).

Required maternally for early embryonic cell divisions. May have a role in DNA replication. This Caenorhabditis briggsae protein is Embryonic developmental protein tofu-6.